Here is a 164-residue protein sequence, read N- to C-terminus: Transcription elongation factor GreA (164 aa).

Belongs to the GreA/GreB family.

Functionally, necessary for efficient RNA polymerase transcription elongation past template-encoded arresting sites. The arresting sites in DNA have the property of trapping a certain fraction of elongating RNA polymerases that pass through, resulting in locked ternary complexes. Cleavage of the nascent transcript by cleavage factors such as GreA or GreB allows the resumption of elongation from the new 3'terminus. GreA releases sequences of 2 to 3 nucleotides. This chain is Transcription elongation factor GreA, found in Helicobacter pylori (strain J99 / ATCC 700824) (Campylobacter pylori J99).